The primary structure comprises 213 residues: Kynurenine formamidase (213 aa).

Tryptophan 18 lines the substrate pocket. The Zn(2+) site is built by histidine 48, histidine 52, and aspartate 54. Residue histidine 58 is the Proton donor/acceptor of the active site. 2 residues coordinate Zn(2+): histidine 160 and glutamate 172.

Belongs to the Cyclase 1 superfamily. KynB family. Homodimer. Requires Zn(2+) as cofactor.

The enzyme catalyses N-formyl-L-kynurenine + H2O = L-kynurenine + formate + H(+). It participates in amino-acid degradation; L-tryptophan degradation via kynurenine pathway; L-kynurenine from L-tryptophan: step 2/2. Its function is as follows. Catalyzes the hydrolysis of N-formyl-L-kynurenine to L-kynurenine, the second step in the kynurenine pathway of tryptophan degradation. This is Kynurenine formamidase from Burkholderia orbicola (strain MC0-3).